The chain runs to 23 residues: Aurein-4.2 (23 aa).

Belongs to the frog skin active peptide (FSAP) family. Aurein subfamily. As to expression, expressed by the skin dorsal glands.

It is found in the secreted. In terms of biological role, has no antimicrobial or anticancer activity. This Ranoidea aurea (Green and golden bell frog) protein is Aurein-4.2.